A 504-amino-acid polypeptide reads, in one-letter code: Maturase K (504 aa).

The protein belongs to the intron maturase 2 family. MatK subfamily.

It localises to the plastid. It is found in the chloroplast. In terms of biological role, usually encoded in the trnK tRNA gene intron. Probably assists in splicing its own and other chloroplast group II introns. This chain is Maturase K, found in Kokia drynarioides (Hawaiian tree cotton).